Consider the following 510-residue polypeptide: AAA-ATPase At3g28540 (510 aa).

Residues 7–25 form a helical membrane-spanning segment; it reads LFGFTGTTMASLMFFWSVY. 246–253 contributes to the ATP binding site; the sequence is GPPGTGKS. Residues 460 to 510 are disordered; it reads KEKAKKLAEEEKMKKAARDARRIKKKAEEEHKKKNKVEENGDVSHDNGNHI.

This sequence belongs to the AAA ATPase family. BCS1 subfamily. It depends on Mg(2+) as a cofactor.

It is found in the membrane. It catalyses the reaction ATP + H2O = ADP + phosphate + H(+). This is AAA-ATPase At3g28540 from Arabidopsis thaliana (Mouse-ear cress).